We begin with the raw amino-acid sequence, 501 residues long: MLDLKQYEVWFITGSQHLYGPETLEQVAKHSQIIAAGLDQSSTIPVRVVFKPVLKTPDEIYNLVLEANAAKNCIGLVAWMHTFSPAKMWIAGLRSLQKPLAHLHTQFNSEIPWSEIDMDFMNLNQAAHGDREFGFIVSRMRLERKVIVGHWQDSEVHDRIAAWTRAAAAWHDAQGARFARFGDNMREVAVTEGDKVNAQMRLGYSVSGYGVGDLVRFVNEVSDADIDSTLQEYAEQYELAAGLQAGGEQHHSLREAARIELGLRYFLEHGNFKGFTTTFEDLHGLVQLPGLGPQRLMDRGYGFAGEGDWKTAALVRAMKVMSAGLNGGTSFMEDYTYHFGSNGMKVLGAHMLEICPSIAATKPRLEVHPLGIGGKADPVRMVFDAKTGPAVNASIVEMGNRLRLINSVVDAVETDQPLPKLPVARALWLPQPDLKTAAAAWIYAGGAHHTGFSFDLTSEHLADFAEIAGMEYLQIDRNTNVQQFKQELRWNDLYYHLAKGL.

Residues glutamate 306, glutamate 333, histidine 350, and histidine 449 each contribute to the Mn(2+) site.

The protein belongs to the arabinose isomerase family. The cofactor is Mn(2+).

The enzyme catalyses beta-L-arabinopyranose = L-ribulose. The protein operates within carbohydrate degradation; L-arabinose degradation via L-ribulose; D-xylulose 5-phosphate from L-arabinose (bacterial route): step 1/3. Its function is as follows. Catalyzes the conversion of L-arabinose to L-ribulose. In Herpetosiphon aurantiacus (strain ATCC 23779 / DSM 785 / 114-95), this protein is L-arabinose isomerase.